Reading from the N-terminus, the 178-residue chain is ATP synthase subunit delta (178 aa).

Belongs to the ATPase delta chain family. F-type ATPases have 2 components, F(1) - the catalytic core - and F(0) - the membrane proton channel. F(1) has five subunits: alpha(3), beta(3), gamma(1), delta(1), epsilon(1). F(0) has three main subunits: a(1), b(2) and c(10-14). The alpha and beta chains form an alternating ring which encloses part of the gamma chain. F(1) is attached to F(0) by a central stalk formed by the gamma and epsilon chains, while a peripheral stalk is formed by the delta and b chains.

The protein localises to the cell inner membrane. Its function is as follows. F(1)F(0) ATP synthase produces ATP from ADP in the presence of a proton or sodium gradient. F-type ATPases consist of two structural domains, F(1) containing the extramembraneous catalytic core and F(0) containing the membrane proton channel, linked together by a central stalk and a peripheral stalk. During catalysis, ATP synthesis in the catalytic domain of F(1) is coupled via a rotary mechanism of the central stalk subunits to proton translocation. This protein is part of the stalk that links CF(0) to CF(1). It either transmits conformational changes from CF(0) to CF(1) or is implicated in proton conduction. The chain is ATP synthase subunit delta from Nitrosomonas eutropha (strain DSM 101675 / C91 / Nm57).